The sequence spans 292 residues: 33 kDa chaperonin (292 aa).

2 cysteine pairs are disulfide-bonded: Cys236-Cys238 and Cys269-Cys272.

Belongs to the HSP33 family. Under oxidizing conditions two disulfide bonds are formed involving the reactive cysteines. Under reducing conditions zinc is bound to the reactive cysteines and the protein is inactive.

The protein localises to the cytoplasm. Functionally, redox regulated molecular chaperone. Protects both thermally unfolding and oxidatively damaged proteins from irreversible aggregation. Plays an important role in the bacterial defense system toward oxidative stress. This is 33 kDa chaperonin from Ruminiclostridium cellulolyticum (strain ATCC 35319 / DSM 5812 / JCM 6584 / H10) (Clostridium cellulolyticum).